Consider the following 490-residue polypeptide: Trigger factor (490 aa).

In terms of domain architecture, PPIase FKBP-type spans 161–247 (GDQVIVDIEA…VHEVKEAELP (87 aa)). Low complexity predominate over residues 441–460 (AEPAEGTEPAAEEAVTAPEV). The tract at residues 441 to 490 (AEPAEGTEPAAEEAVTAPEVVDGETTPASESAESLAVTETGSRADDDQAS) is disordered. Residues 466–481 (TPASESAESLAVTETG) show a composition bias toward polar residues.

The protein belongs to the FKBP-type PPIase family. Tig subfamily.

It is found in the cytoplasm. The catalysed reaction is [protein]-peptidylproline (omega=180) = [protein]-peptidylproline (omega=0). In terms of biological role, involved in protein export. Acts as a chaperone by maintaining the newly synthesized protein in an open conformation. Functions as a peptidyl-prolyl cis-trans isomerase. In Thermomicrobium roseum (strain ATCC 27502 / DSM 5159 / P-2), this protein is Trigger factor.